A 592-amino-acid polypeptide reads, in one-letter code: Vacuolin-B (592 aa).

Polar residues predominate over residues 1-30; it reads MIESSSFMKKTSSENSIGSRSNIHEASTFS. Positions 1–35 are disordered; sequence MIESSSFMKKTSSENSIGSRSNIHEASTFSSEHEN. Residues 480–534 adopt a coiled-coil conformation; the sequence is KTTEARLKAETDNIALEQKGKAIIAEAQAKLESAQKQAQALLITAEAQKKVQEMQ. Residues 491-555 are oligomerization domain; it reads DNIALEQKGK…EIELAKIKSE (65 aa).

Belongs to the vacuolin family. Homotrimer.

It localises to the endosome membrane. The protein localises to the lysosome membrane. Negative regulator of late steps of the endocytic pathway. In Dictyostelium discoideum (Social amoeba), this protein is Vacuolin-B (vacB).